A 90-amino-acid chain; its full sequence is Large ribosomal subunit protein bL27 (90 aa).

The interval 1 to 22 is disordered; that stretch reads MAHKKSGGSSSNGRDSAGRRLG.

It belongs to the bacterial ribosomal protein bL27 family.

The chain is Large ribosomal subunit protein bL27 from Caulobacter sp. (strain K31).